An 800-amino-acid polypeptide reads, in one-letter code: General transcription and DNA repair factor IIH helicase/translocase subunit XPB (800 aa).

Residues 1–27 (MSSGDSNLKRRRGGNTGQSSKSYNTWT) form a disordered region. The span at 17 to 27 (GQSSKSYNTWT) shows a compositional bias: polar residues. Positions 329–491 (MFGNGRARSG…DLNFLIGPKL (163 aa)) constitute a Helicase ATP-binding domain. 342–349 (LPCGAGKS) provides a ligand contact to ATP. The DEVH box motif lies at 444 to 447 (DEVH). Residues 546-704 (RACEYLIRFH…ELPGIDQEVN (159 aa)) enclose the Helicase C-terminal domain. The segment at 743 to 769 (GAKKSKSSAPTVSRTTGGSTRALSGGN) is disordered. Polar residues predominate over residues 749-764 (SSAPTVSRTTGGSTRA).

Belongs to the helicase family. RAD25/XPB subfamily. Component of the 7-subunit TFIIH core complex composed of XPB/repB, XPD/repD, gtf2h1, gtf2h2, gtf2h3, gtf2h4 and gtf2h5, which is active in NER. The core complex associates with the 3-subunit CDK-activating kinase (CAK) module composed of cycH/cyclin H, cdk7 and mnat1 to form the 10-subunit holoenzyme (holo-TFIIH) active in transcription.

It is found in the nucleus. The catalysed reaction is Couples ATP hydrolysis with the unwinding of duplex DNA by translocating in the 3'-5' direction.. It carries out the reaction ATP + H2O = ADP + phosphate + H(+). In terms of biological role, ATP-dependent 3'-5' DNA helicase/translocase; binds dsDNA rather than ssDNA, unzipping it in a translocase rather than classical helicase activity. Component of the general transcription and DNA repair factor IIH (TFIIH) core complex. When complexed to CDK-activating kinase (CAK), involved in RNA transcription by RNA polymerase II. The ATPase activity of XPB/ERCC3, but not its helicase activity, is required for DNA opening; it may wrap around the damaged DNA wedging it open, causing localized melting and twisting that allows XPD/ERCC2 helicase to anchor. The ATP-dependent helicase activity of XPB/ERCC3 may be required for promoter escape. Also involved in transcription-coupled nucleotide excision repair (NER) of damaged DNA. In NER, TFIIH acts by opening DNA around the lesion to allow the excision of the damaged oligonucleotide and its replacement by a new DNA fragment. The structure of the TFIIH transcription complex differs from the NER-TFIIH complex. This chain is General transcription and DNA repair factor IIH helicase/translocase subunit XPB, found in Dictyostelium discoideum (Social amoeba).